The sequence spans 630 residues: GATA-type transcription factor SRE1 (630 aa).

Disordered stretches follow at residues 1–139 and 162–203; these read MTGL…TPLW and DRPT…RLTD. Composition is skewed to polar residues over residues 66–82, 115–133, and 175–196; these read DNTQ…QLQN, KAQS…NCGT, and YGSS…TNDG. A GATA-type 1 zinc finger spans residues 128–152; that stretch reads CSNCGTKRTPLWRRSPTGATICNAC. Residues 219–237 are cystein-rich region (CRR); it reads CPGGGSCNGTGGAEGCDGC. Positions 256–283 are disordered; it reads HTPRTSPQVSTQGGPGSTEGDAGSSNPE. Over residues 258-267 the composition is skewed to polar residues; the sequence is PRTSPQVSTQ. The segment at 291–315 adopts a GATA-type 2 zinc-finger fold; the sequence is CQNCQTTVTPLWRRDENGHPICNAC. The disordered stretch occupies residues 339-609; it reads KRVVPAMREQ…AKAERRARLQ (271 aa). The segment covering 349-363 has biased composition (polar residues); the sequence is SPPSATQSSNGSVSP. 2 stretches are compositionally biased toward low complexity: residues 436-447 and 492-503; these read NNHNNGETTNTH and SSSSASFPNNNP. Polar residues predominate over residues 504 to 513; the sequence is GRFNSISSLL. Positions 558–568 are enriched in low complexity; the sequence is SHSPPRFSPSL. Positions 595–609 are enriched in basic and acidic residues; sequence VDHRDAKAERRARLQ. Residues 595–630 are a coiled coil; sequence VDHRDAKAERRARLQREAQDMREALKAKERELALLE.

The protein localises to the nucleus. Functionally, GATA-type transcription repressor that regulates iron- acquisition genes through specific binding the GATA sequence element 5'-(G/A)ATC(T/A)GATAA-3' of target promoters in an iron- and zinc-dependent manner. Regulation occurs via direct binding of iron ions. Iron acquisition regulation is critical for survival under both iron-limiting conditions (to acquire essential iron) and iron-replete conditions (to limit iron toxicity). SRE1 targets include genes encoding a number of key iron-regulated factors such as those involved in siderophore biosynthesis, presumed ferric reductase activity, iron-responsive transcriptional regulation, oxidative stress response, as well as genes encoding a number of putative oxidoreductases, metabolic and mitochondrial enzymes, superoxide dismutase, and genes previously identified as induced during nitrosative stress. This chain is GATA-type transcription factor SRE1, found in Ajellomyces capsulatus (Darling's disease fungus).